An 89-amino-acid polypeptide reads, in one-letter code: Small ribosomal subunit protein uS15 (89 aa).

The protein belongs to the universal ribosomal protein uS15 family. Part of the 30S ribosomal subunit. Forms a bridge to the 50S subunit in the 70S ribosome, contacting the 23S rRNA.

In terms of biological role, one of the primary rRNA binding proteins, it binds directly to 16S rRNA where it helps nucleate assembly of the platform of the 30S subunit by binding and bridging several RNA helices of the 16S rRNA. Functionally, forms an intersubunit bridge (bridge B4) with the 23S rRNA of the 50S subunit in the ribosome. This is Small ribosomal subunit protein uS15 from Methylocella silvestris (strain DSM 15510 / CIP 108128 / LMG 27833 / NCIMB 13906 / BL2).